Consider the following 869-residue polypeptide: DNA mismatch repair protein MutS (869 aa).

602–609 (GPNMSGKS) is a binding site for ATP.

This sequence belongs to the DNA mismatch repair MutS family.

Functionally, this protein is involved in the repair of mismatches in DNA. It is possible that it carries out the mismatch recognition step. This protein has a weak ATPase activity. The chain is DNA mismatch repair protein MutS from Staphylococcus carnosus (strain TM300).